We begin with the raw amino-acid sequence, 387 residues long: Penicillopepsin-1 (387 aa).

The signal sequence occupies residues 1-19; the sequence is MVNSKTVVSALALSALAAA. Positions 20–66 are cleaved as a propeptide — activation peptide; sequence APAPSSTTSFSINQVAVKKPAIHPAVKYAKALAKYHAEIPSNVASAA. One can recognise a Peptidase A1 domain in the interval 85-384; that stretch reads YVTPITAGSS…DGDNLQLGFA (300 aa). Catalysis depends on residues aspartate 101 and aspartate 279. N-linked (GlcNAc...) asparagine glycosylation occurs at asparagine 304. Cysteine 315 and cysteine 347 are joined by a disulfide.

Belongs to the peptidase A1 family. In terms of assembly, monomer.

The protein resides in the secreted. It carries out the reaction Hydrolysis of proteins with broad specificity similar to that of pepsin A, preferring hydrophobic residues at P1 and P1', but also cleaving 20-Gly-|-Glu-21 in the B chain of insulin. Clots milk, and activates trypsinogen.. Its function is as follows. Secreted aspartic endopeptidase that allows assimilation of proteinaceous substrates. The scissile peptide bond is attacked by a nucleophilic water molecule activated by two aspartic residues in the active site. Shows a broad primary substrate specificity. Favors hydrophobic residues at the P1 and P1' positions, but can also activate trypsinogen and hydrolyze the B chain of insulin between positions 'Gly-20' and 'Glu-21'. The polypeptide is Penicillopepsin-1 (pepA) (Talaromyces stipitatus (strain ATCC 10500 / CBS 375.48 / QM 6759 / NRRL 1006) (Penicillium stipitatum)).